Consider the following 285-residue polypeptide: NAD kinase (285 aa).

The Proton acceptor role is filled by aspartate 66. NAD(+)-binding positions include 66–67 (DG), 137–138 (ND), arginine 148, arginine 165, aspartate 167, and 178–183 (TAYSMS).

This sequence belongs to the NAD kinase family. It depends on a divalent metal cation as a cofactor.

It localises to the cytoplasm. The catalysed reaction is NAD(+) + ATP = ADP + NADP(+) + H(+). In terms of biological role, involved in the regulation of the intracellular balance of NAD and NADP, and is a key enzyme in the biosynthesis of NADP. Catalyzes specifically the phosphorylation on 2'-hydroxyl of the adenosine moiety of NAD to yield NADP. This is NAD kinase from Chlorobium phaeobacteroides (strain DSM 266 / SMG 266 / 2430).